The primary structure comprises 27 residues: Trichocyst matrix protein T4-C (27 aa).

Belongs to the TMP family.

The protein localises to the trichocyst. Its function is as follows. Structural protein that crystallize inside the trichocyst matrix. This is Trichocyst matrix protein T4-C (T4C) from Paramecium tetraurelia.